A 130-amino-acid chain; its full sequence is UPF0102 protein RSc3265 (130 aa).

Belongs to the UPF0102 family.

The chain is UPF0102 protein RSc3265 from Ralstonia nicotianae (strain ATCC BAA-1114 / GMI1000) (Ralstonia solanacearum).